Here is an 88-residue protein sequence, read N- to C-terminus: Protein K3 (88 aa).

Residues 8–82 (LPNAGDVIKG…TKGYIDVNYK (75 aa)) enclose the S1 motif domain. Binding to host EIF2AK2/PKR regions lie at residues 43-53 (SVKMHMDRYVE) and 74-79 (KGYIDV).

The protein belongs to the poxviridae K3 protein family. In terms of assembly, interacts with host EIF2AK2/PKR kinase.

In terms of biological role, viral mimic of EIF2S1/eIF-2alpha that acts as a pseudosubstrate for EIF2AK2/PKR kinase. Inhibits therefore EIF2S1/eIF-2alpha phosphorylation by host EIF2AK2/PKR kinase and prevents protein synthesis shutoff. Determinant of host species specificity. The protein is Protein K3 of Vaccinia virus (strain Western Reserve) (VACV).